A 371-amino-acid polypeptide reads, in one-letter code: Alanine dehydrogenase (371 aa).

Residues arginine 15 and lysine 74 each contribute to the substrate site. The Proton donor/acceptor role is filled by histidine 95. NAD(+) contacts are provided by residues serine 133, 177–178, aspartate 197, serine 219, 238–239, 266–269, and 298–301; these read QA, VL, IAID, and VANM. The active-site Proton donor/acceptor is the aspartate 269.

Belongs to the AlaDH/PNT family. Homohexamer. Trimer of dimer.

The enzyme catalyses L-alanine + NAD(+) + H2O = pyruvate + NH4(+) + NADH + H(+). It participates in amino-acid degradation; L-alanine degradation via dehydrogenase pathway; NH(3) and pyruvate from L-alanine: step 1/1. Functionally, catalyzes the reversible reductive amination of pyruvate to L-alanine. May play a role in cell wall synthesis as L-alanine is an important constituent of the peptidoglycan layer. The protein is Alanine dehydrogenase (ald) of Staphylococcus epidermidis (strain ATCC 35984 / DSM 28319 / BCRC 17069 / CCUG 31568 / BM 3577 / RP62A).